The sequence spans 1873 residues: Kinesin-related protein 8 (1873 aa).

A Kinesin motor domain is found at 13 to 413; that stretch reads CVRVALRVRP…LKYAYRARNI (401 aa). 93-100 lines the ATP pocket; sequence GQTGSGKT. 9 disordered regions span residues 231-302, 463-567, 778-797, 841-891, 930-1008, 1179-1207, 1244-1267, 1328-1360, and 1403-1467; these read NSPV…DERN, VSIP…SPTS, LDKDKDKDKDNKDKDQYYED, KIDS…ARKT, KQRV…TEQL, PQPLQSQQQQQEKQQKQSNSEQVLEQRSS, LPSQQQLSSSQELAEEYTSPSTSS, TTTTTTTTNKQQVPKSFAPLNNTNNNNNNNNSS, and NNIT…PRPD. The span at 232–247 shows a compositional bias: low complexity; the sequence is SPVTSSSTSSTSTSSS. Residues 280-297 are compositionally biased toward acidic residues; that stretch reads IDEDEEDDEEDEDDDIMS. Residues 473–567 show a composition bias toward low complexity; it reads TPTLTNNNNN…NNTATPSPTS (95 aa). Positions 715 to 933 form a coiled coil; the sequence is FENDSEELSD…KEIEVHKQRV (219 aa). 5 stretches are compositionally biased toward low complexity: residues 937–1005, 1182–1200, 1244–1254, 1348–1358, and 1423–1454; these read INSK…TPTT, LQSQQQQQEKQQKQSNSEQ, LPSQQQLSSSQ, NNTNNNNNNNN, and SLQSSPLSLSLESGLATALANNGNNNNNSNNN. WD repeat units lie at residues 1506–1546, 1548–1587, 1589–1628, 1636–1673, and 1677–1714; these read GHDG…NMLD, SSPGPVRSLCINGSSGCMFSGGAERTVKVWDIRSPGNTNL, IFKTPSDVNCLVTYGNYVVSGLENGTFKVWDIRHMQKPLK, HHTGTIFSMSVTSKYLVTGSRDHTINLFHRDSFVLAQK, and PHHDGVTSIAVLDDVIYSGSRDRTIKRWDVSSINNLIN. The interval 1758–1780 is disordered; that stretch reads NNNNNNSSNNNKSSSAPSSTTSS. WD repeat units follow at residues 1805–1842 and 1844–1873; these read AHNDWVNCLCIHNGMIFSGGKDSNIKGWDPLLSSNSLL and GHESSISCLTSSKEFLFSGSTDKCIKIWKC.

This sequence belongs to the TRAFAC class myosin-kinesin ATPase superfamily. Kinesin family.

The protein localises to the cytoplasm. Its subcellular location is the cytoskeleton. Its function is as follows. Microtubule-associated force-producing protein that plays a role in organelle transport. Its motor activity is directed toward the microtubule's plus end. Cooperates with kif10 and dynein to organize interphase microtubules. The chain is Kinesin-related protein 8 (kif8) from Dictyostelium discoideum (Social amoeba).